The primary structure comprises 66 residues: DNA-directed RNA polymerase subunit Rpo10 (66 aa).

Residues Cys7, Cys10, Cys44, and Cys45 each contribute to the Zn(2+) site.

It belongs to the archaeal Rpo10/eukaryotic RPB10 RNA polymerase subunit family. Part of the RNA polymerase complex. The cofactor is Zn(2+).

Its subcellular location is the cytoplasm. The enzyme catalyses RNA(n) + a ribonucleoside 5'-triphosphate = RNA(n+1) + diphosphate. Its function is as follows. DNA-dependent RNA polymerase (RNAP) catalyzes the transcription of DNA into RNA using the four ribonucleoside triphosphates as substrates. The sequence is that of DNA-directed RNA polymerase subunit Rpo10 from Staphylothermus marinus (strain ATCC 43588 / DSM 3639 / JCM 9404 / F1).